The primary structure comprises 364 residues: Spermidine/putrescine import ATP-binding protein PotA (364 aa).

In terms of domain architecture, ABC transporter spans 6 to 236 (IEIRQIYKSY…PANLHVAMFI (231 aa)). Residue 38–45 (GPSGCGKT) coordinates ATP.

It belongs to the ABC transporter superfamily. Spermidine/putrescine importer (TC 3.A.1.11.1) family. The complex is composed of two ATP-binding proteins (PotA), two transmembrane proteins (PotB and PotC) and a solute-binding protein (PotD).

The protein resides in the cell inner membrane. It carries out the reaction ATP + H2O + polyamine-[polyamine-binding protein]Side 1 = ADP + phosphate + polyamineSide 2 + [polyamine-binding protein]Side 1.. Its function is as follows. Part of the ABC transporter complex PotABCD involved in spermidine/putrescine import. Responsible for energy coupling to the transport system. This is Spermidine/putrescine import ATP-binding protein PotA from Legionella pneumophila subsp. pneumophila (strain Philadelphia 1 / ATCC 33152 / DSM 7513).